The chain runs to 135 residues: Nucleoside diphosphate kinase (135 aa).

ATP is bound by residues K9, Y57, R85, T91, R102, and N112. The active-site Pros-phosphohistidine intermediate is the H115.

The protein belongs to the NDK family. As to quaternary structure, homotetramer. The cofactor is Mg(2+).

The protein resides in the cytoplasm. The catalysed reaction is a 2'-deoxyribonucleoside 5'-diphosphate + ATP = a 2'-deoxyribonucleoside 5'-triphosphate + ADP. It catalyses the reaction a ribonucleoside 5'-diphosphate + ATP = a ribonucleoside 5'-triphosphate + ADP. Functionally, major role in the synthesis of nucleoside triphosphates other than ATP. The ATP gamma phosphate is transferred to the NDP beta phosphate via a ping-pong mechanism, using a phosphorylated active-site intermediate. The sequence is that of Nucleoside diphosphate kinase from Thermoanaerobacter pseudethanolicus (strain ATCC 33223 / 39E) (Clostridium thermohydrosulfuricum).